The chain runs to 297 residues: GTP-binding protein REM 1 (297 aa).

The segment covering 1–10 (MTLNTQQEAK) has biased composition (polar residues). Residues 1 to 73 (MTLNTQQEAK…DGWSSESSDS (73 aa)) form a disordered region. A Phosphoserine modification is found at serine 51. Residues 64–73 (DGWSSESSDS) are compositionally biased toward low complexity. Residues 87 to 94 (GDPGVGKT) and 194 to 197 (NKAD) contribute to the GTP site. Residues 267–286 (ARRFLARLTARSARRRALKA) are calmodulin-binding.

It belongs to the small GTPase superfamily. RGK family. In terms of assembly, in vitro, interacts with calmodulin in a calcium-dependent manner. Interacts 14-3-3 family members including YWHAE, YWHAH, YWHAQ, YWHAZ in a phosphorylation-dependent manner. In terms of tissue distribution, high expression in cardiac muscle. Moderate expression in lung, skeletal muscle and kidney. Low levels in spleen and brain.

In terms of biological role, promotes endothelial cell sprouting and actin cytoskeletal reorganization. May be involved in angiogenesis. May function in Ca(2+) signaling. This chain is GTP-binding protein REM 1 (Rem1), found in Mus musculus (Mouse).